We begin with the raw amino-acid sequence, 544 residues long: CTP synthase (544 aa).

The interval 1–266 (MTRFVFITGG…DREVLRHFNL (266 aa)) is amidoligase domain. Position 13 (serine 13) interacts with CTP. Serine 13 lines the UTP pocket. 14–19 (SLGKGI) serves as a coordination point for ATP. Tyrosine 54 is a binding site for L-glutamine. Aspartate 71 contributes to the ATP binding site. Aspartate 71 and glutamate 140 together coordinate Mg(2+). CTP-binding positions include 147-149 (DIE), 187-192 (KTKPTQ), and lysine 223. Residues 187-192 (KTKPTQ) and lysine 223 each bind UTP. The Glutamine amidotransferase type-1 domain maps to 292–543 (KIAIVGKYIT…VAAAVRQARL (252 aa)). Glycine 354 serves as a coordination point for L-glutamine. Cysteine 381 functions as the Nucleophile; for glutamine hydrolysis in the catalytic mechanism. L-glutamine contacts are provided by residues 382-385 (FGMQ), glutamate 405, and arginine 471. Active-site residues include histidine 516 and glutamate 518.

This sequence belongs to the CTP synthase family. In terms of assembly, homotetramer.

It carries out the reaction UTP + L-glutamine + ATP + H2O = CTP + L-glutamate + ADP + phosphate + 2 H(+). It catalyses the reaction L-glutamine + H2O = L-glutamate + NH4(+). The catalysed reaction is UTP + NH4(+) + ATP = CTP + ADP + phosphate + 2 H(+). It functions in the pathway pyrimidine metabolism; CTP biosynthesis via de novo pathway; CTP from UDP: step 2/2. Its activity is regulated as follows. Allosterically activated by GTP, when glutamine is the substrate; GTP has no effect on the reaction when ammonia is the substrate. The allosteric effector GTP functions by stabilizing the protein conformation that binds the tetrahedral intermediate(s) formed during glutamine hydrolysis. Inhibited by the product CTP, via allosteric rather than competitive inhibition. In terms of biological role, catalyzes the ATP-dependent amination of UTP to CTP with either L-glutamine or ammonia as the source of nitrogen. Regulates intracellular CTP levels through interactions with the four ribonucleotide triphosphates. The sequence is that of CTP synthase from Granulibacter bethesdensis (strain ATCC BAA-1260 / CGDNIH1).